The following is a 358-amino-acid chain: Serine/threonine-protein phosphatase 2A activator 2 (358 aa).

The protein belongs to the PTPA-type PPIase family.

It localises to the cytoplasm. The catalysed reaction is [protein]-peptidylproline (omega=180) = [protein]-peptidylproline (omega=0). Functionally, PPIases accelerate the folding of proteins. It catalyzes the cis-trans isomerization of proline imidic peptide bonds in oligopeptides. Acts as a regulatory subunit for PP2A-like phosphatases modulating their activity or substrate specificity, probably by inducing a conformational change in the catalytic subunit, a direct target of the PPIase. Can reactivate inactive phosphatase PP2A-phosphatase methylesterase complexes (PP2Ai) in presence of ATP and Mg(2+) by dissociating the inactive form from the complex. The sequence is that of Serine/threonine-protein phosphatase 2A activator 2 (RRD2) from Candida glabrata (strain ATCC 2001 / BCRC 20586 / JCM 3761 / NBRC 0622 / NRRL Y-65 / CBS 138) (Yeast).